The chain runs to 220 residues: Flavin-dependent thymidylate synthase (220 aa).

The ThyX domain occupies 1 to 208; the sequence is MKIDILDKGF…PWTFEAFLKY (208 aa). FAD contacts are provided by residues threonine 55, 78 to 80, and glutamate 86; that span reads RHR. DUMP is bound by residues 75-78, 86-90, and arginine 147; these read QWFR and ELSGR. A ThyX motif motif is present at residues 78-88; the sequence is RHRIASYNELS. FAD-binding positions include 163-165 and asparagine 169; that span reads NAR. DUMP is bound at residue arginine 174. Arginine 174 functions as the Involved in ionization of N3 of dUMP, leading to its activation in the catalytic mechanism.

The protein belongs to the thymidylate synthase ThyX family. In terms of assembly, homotetramer. FAD is required as a cofactor.

The catalysed reaction is dUMP + (6R)-5,10-methylene-5,6,7,8-tetrahydrofolate + NADPH + H(+) = dTMP + (6S)-5,6,7,8-tetrahydrofolate + NADP(+). It functions in the pathway pyrimidine metabolism; dTTP biosynthesis. In terms of biological role, catalyzes the reductive methylation of 2'-deoxyuridine-5'-monophosphate (dUMP) to 2'-deoxythymidine-5'-monophosphate (dTMP) while utilizing 5,10-methylenetetrahydrofolate (mTHF) as the methyl donor, and NADPH and FADH(2) as the reductant. This chain is Flavin-dependent thymidylate synthase, found in Thermotoga petrophila (strain ATCC BAA-488 / DSM 13995 / JCM 10881 / RKU-1).